The chain runs to 401 residues: Homeobox protein engrailed-1 (401 aa).

Disordered regions lie at residues 1 to 102, 138 to 167, 229 to 253, and 293 to 315; these read MEEQ…PAAQ, GGGA…HSLG, SKPS…AKFP, and RPSS…DKRP. The span at 13–48 shows a compositional bias: low complexity; the sequence is DSGLGAVAAAAPSGLSLSLSPGASGSSGSDGDSVPV. Pro residues-rich tracts occupy residues 49–64 and 73–88; these read SPQP…PCLP and PPHP…PPPQ. The span at 89–102 shows a compositional bias: low complexity; sequence HLAAPAHQPQPAAQ. 2 stretches are compositionally biased toward gly residues: residues 138–147 and 234–243; these read GGGAAAGGGS and SGGGSGGNAG. A DNA-binding region (homeobox) is located at residues 312-371; it reads DKRPRTAFTAEQLQRLKAEFQANRYITEQRRQTLAQELSLNESQIKIWFQNKRAKIKKAT.

Belongs to the engrailed homeobox family.

It localises to the nucleus. Required for proper formation of the apical ectodermal ridge and correct dorsal-ventral patterning in the limb. The chain is Homeobox protein engrailed-1 (En1) from Mus musculus (Mouse).